Here is a 536-residue protein sequence, read N- to C-terminus: MEITNPILTGFNPDPSLCRQGEDYYIATSTFEWFPGVRIYHSRDLKNWSLVSTPLDRVSMLDMKGNPDSGGIWAPCLSYADGKFWLLYTDVKIVDSPWKNGRNFLVTAPSIEGPWSEPIPMGNGGFDPSLFHDDDGRKYYIYRPWGPRHHSNPHNTIVLQAFDPQTGTLSPERKTLFTGTPLCYTEGAHLYRHAGWYYLMAAEGGTSYEHAVVVLRSKNIDGPYELHPDVTMMTSWHLPENPLQKSGHGSLLQTHTGEWYMAYLTSRPLRLPGVPLLASGGRGYCPLGRETGIARIEWRDGWPYVEGGKHAQLTVKGPQVAEQPAAVPGNWRDDFDASSLDPELQTLRIPFDDTLGSLTARPGFLRLYGNDSLNSTFTQSTVARRWQHFAFRAETRMEFSPVHFQQSAGLTCYYNSKNWSYCFVDYEEGQGRTIKVIQLDHNVPSWPLHEQPIPVPEHAESVWLRVDVDTLVYRYSYSFDGETWHTVPVTYEAWKLSDDYIGGRGFFTGAFVGLHCEDISGDGCYADFDYFTYEPV.

D14 functions as the Proton acceptor in the catalytic mechanism. The active-site Proton donor is the E186.

Belongs to the glycosyl hydrolase 43 family.

It catalyses the reaction Hydrolysis of (1-&gt;4)-beta-D-xylans, to remove successive D-xylose residues from the non-reducing termini.. The chain is Putative beta-xylosidase (yagH) from Escherichia coli (strain K12).